Reading from the N-terminus, the 306-residue chain is MNVKRKATLKFGICIGLLCVSFTGFNSLFGSTHAEAKSIENTKMTSCITNQKFVQLEKKFDARLGVYAIDTGSNKTIAYRPNERFAYASTYKVLAAAAVLKQKPIEKLNDVIRYTKEDLVTYSPITEKHLDTGMSLKEISEAAIRYSDNTAGNILLQQLGGPKGFEKSLKQIGDHVTKADRFETDLNSAIPGDIRDTSTAKALATDLKAFTLGNTLTTDKRTILTDWMRGNATGDELIRAGAPAGWEVGDKSGAGSYGTRNDIAIVWPPDRAPIVLAILTKRFTKDAEYDNALIAEAAKVALDDLK.

The first 34 residues, 1–34 (MNVKRKATLKFGICIGLLCVSFTGFNSLFGSTHA), serve as a signal peptide directing secretion. Serine 89 acts as the Acyl-ester intermediate in catalysis. 251-253 (KSG) provides a ligand contact to substrate.

This sequence belongs to the class-A beta-lactamase family.

The enzyme catalyses a beta-lactam + H2O = a substituted beta-amino acid. In terms of biological role, this protein is a beta-lactamase with a substrate specificity for penicillins. The polypeptide is Beta-lactamase (penP) (Bacillus amyloliquefaciens (Bacillus velezensis)).